A 91-amino-acid polypeptide reads, in one-letter code: Em-like protein (91 aa).

2 stretches are compositionally biased toward basic and acidic residues: residues 1-18 (MEQQ…REGE) and 31-51 (DAQE…KEQI). The tract at residues 1-91 (MEQQQDRREL…PIDESKYRHP (91 aa)) is disordered. Residues 62–73 (KGGLSSAGGPGG) show a composition bias toward gly residues. Residues 75–91 (RASEEGRPIDESKYRHP) are compositionally biased toward basic and acidic residues.

It belongs to the small hydrophilic plant seed protein family.

The chain is Em-like protein from Picea glauca (White spruce).